The primary structure comprises 267 residues: Phosphate import ATP-binding protein PstB (267 aa).

The 240-residue stretch at V12–N251 folds into the ABC transporter domain. Residue G44–S51 participates in ATP binding.

It belongs to the ABC transporter superfamily. Phosphate importer (TC 3.A.1.7) family. The complex is composed of two ATP-binding proteins (PstB), two transmembrane proteins (PstC and PstA) and a solute-binding protein (PstS).

It localises to the cell inner membrane. It catalyses the reaction phosphate(out) + ATP + H2O = ADP + 2 phosphate(in) + H(+). Part of the ABC transporter complex PstSACB involved in phosphate import. Responsible for energy coupling to the transport system. The polypeptide is Phosphate import ATP-binding protein PstB (Prochlorococcus marinus (strain NATL2A)).